Reading from the N-terminus, the 119-residue chain is uncharacterized protein (119 aa).

A disordered region spans residues Met-1–Cys-22.

This is an uncharacterized protein from Saccharomyces cerevisiae (strain ATCC 204508 / S288c) (Baker's yeast).